We begin with the raw amino-acid sequence, 341 residues long: Heterogeneous nuclear ribonucleoproteins A2/B1 (341 aa).

2 consecutive RRM domains span residues 9–92 and 100–179; these read RKLF…ESGK and KKLF…LSRQ. Residue K10 forms a Glycyl lysine isopeptide (Lys-Gly) (interchain with G-Cter in SUMO2) linkage. Phosphoserine is present on S17. Omega-N-methylarginine is present on R26. Position 73 is a phosphoserine (S73). K92 is subject to N6,N6-dimethyllysine; alternate. Residue K92 forms a Glycyl lysine isopeptide (Lys-Gly) (interchain with G-Cter in SUMO2); alternate linkage. Glycyl lysine isopeptide (Lys-Gly) (interchain with G-Cter in SUMO2) cross-links involve residues K100, K108, and K125. Phosphothreonine is present on T128. A Phosphoserine modification is found at S137. A Glycyl lysine isopeptide (Lys-Gly) (interchain with G-Cter in SUMO2) cross-link involves residue K140. At T147 the chain carries Phosphothreonine. Glycyl lysine isopeptide (Lys-Gly) (interchain with G-Cter in SUMO2); alternate cross-links involve residues K156 and K161. An N6-acetyllysine; alternate mark is found at K156 and K161. A Phosphothreonine modification is found at T164. K174 participates in a covalent cross-link: Glycyl lysine isopeptide (Lys-Gly) (interchain with G-Cter in SUMO2). Phosphoserine is present on residues S177 and S189. Positions 181 to 341 are disordered; the sequence is MQEVQSSRSG…SGGYGGRSRY (161 aa). Positions 190 to 211 are enriched in gly residues; that stretch reads GRGGNFGFGDSRGGGGNFGPGP. R191 bears the Asymmetric dimethylarginine; alternate mark. At R191 the chain carries Dimethylated arginine; alternate. Residue R191 is modified to Omega-N-methylarginine; alternate. Residue S200 is modified to Phosphoserine. Residue R201 is modified to Asymmetric dimethylarginine; alternate. Residue R201 is modified to Dimethylated arginine; alternate. At R201 the chain carries Omega-N-methylarginine; alternate. S213 carries the post-translational modification Phosphoserine. R216 bears the Omega-N-methylarginine mark. Phosphoserine is present on residues S219 and S224. Residue R226 is modified to Omega-N-methylarginine. At S247 the chain carries Phosphoserine. At R254 the chain carries Asymmetric dimethylarginine; alternate. At R254 the chain carries Omega-N-methylarginine; alternate. Residues 296–335 form a nuclear targeting sequence region; sequence QQPSNYGPMKSGNFGGSRNMGGPYGGGNYGPGGSGGSGGY. Gly residues predominate over residues 308-341; the sequence is NFGGSRNMGGPYGGGNYGPGGSGGSGGYGGRSRY. S312 bears the Phosphoserine mark. Position 313 is an omega-N-methylarginine (R313). Position 319 is a phosphotyrosine (Y319). Phosphoserine is present on residues S329 and S332. Y335 carries the post-translational modification Phosphotyrosine. R338 carries the omega-N-methylarginine modification.

In terms of assembly, identified in the spliceosome C complex. Identified in a IGF2BP1-dependent mRNP granule complex containing untranslated mRNAs. Interacts with IGF2BP1. Interacts with C9orf72. Interacts with DGCR8. Interacts with TARDBP. Interacts with CKAP5. Interacts with PPIA/CYPA. Interacts (via C-terminus) with FAM76B; the interaction results in retention of HNRNPA2B1 in the nucleus and inhibition of the NF-kappa-B-mediated inflammatory pathway. Interacts with NF-kappa-B inhibitors NFKBIA and NFKBIE; the interaction may be mediated by the RRM2 domain of HNRNPA2B1, and HNRNPA2B1 may interact simultaneously with FAM76B and either NFKBIA or NFKBIE to form a complex. In terms of processing, sumoylated in exosomes, promoting miRNAs-binding. Asymmetric dimethylation at Arg-254 constitutes the major methylation site. According to a report, methylation affects subcellular location and promotes nuclear localization. According to another report, methylation at Arg-254 does not influence nucleocytoplasmic shuttling.

It is found in the nucleus. It localises to the nucleoplasm. Its subcellular location is the cytoplasmic granule. The protein resides in the secreted. The protein localises to the extracellular exosome. Heterogeneous nuclear ribonucleoprotein (hnRNP) that associates with nascent pre-mRNAs, packaging them into hnRNP particles. The hnRNP particle arrangement on nascent hnRNA is non-random and sequence-dependent and serves to condense and stabilize the transcripts and minimize tangling and knotting. Packaging plays a role in various processes such as transcription, pre-mRNA processing, RNA nuclear export, subcellular location, mRNA translation and stability of mature mRNAs. Forms hnRNP particles with at least 20 other different hnRNP and heterogeneous nuclear RNA in the nucleus. Involved in transport of specific mRNAs to the cytoplasm in oligodendrocytes and neurons: acts by specifically recognizing and binding the A2RE (21 nucleotide hnRNP A2 response element) or the A2RE11 (derivative 11 nucleotide oligonucleotide) sequence motifs present on some mRNAs, and promotes their transport to the cytoplasm. Specifically binds single-stranded telomeric DNA sequences, protecting telomeric DNA repeat against endonuclease digestion. Also binds other RNA molecules, such as primary miRNA (pri-miRNAs): acts as a nuclear 'reader' of the N6-methyladenosine (m6A) mark by specifically recognizing and binding a subset of nuclear m6A-containing pri-miRNAs. Binding to m6A-containing pri-miRNAs promotes pri-miRNA processing by enhancing binding of DGCR8 to pri-miRNA transcripts. Involved in miRNA sorting into exosomes following sumoylation, possibly by binding (m6A)-containing pre-miRNAs. Acts as a regulator of efficiency of mRNA splicing, possibly by binding to m6A-containing pre-mRNAs. Plays a role in the splicing of pyruvate kinase PKM by binding repressively to sequences flanking PKM exon 9, inhibiting exon 9 inclusion and resulting in exon 10 inclusion and production of the PKM M2 isoform. This chain is Heterogeneous nuclear ribonucleoproteins A2/B1 (HNRNPA2B1), found in Saguinus oedipus (Cotton-top tamarin).